The chain runs to 502 residues: MAYQVLVICVVSSIVFAYIVWRKERKKKLPPSPKGLPIIGHLHLVSPIPHQDFYKLSLRHGPIMQLFLGSVPCVVASTAEAAKEFLKTHEINFSNRPGQNVAVQFLTYVFGPYGPSVKFIKKLCMSELLGGRMLDQFLPVRQQETKKFIKRVLQKGIAGEAVDFGGEFMRLSNNIISRMTMNQTSSEDEKQAEEMRMLVADVAELMGTFNVSDFIWFLKPFDLQGFNKRIRKTRIRFDAVLDRIIKQREEERRNNKEIGGTRQFKDILDVLLDIGEDDSSEIKLTKENIKAFIMDIFVAGTDTSAATMEWAMAELINNPCVLEKARQEIDAVVGNSRIIEESDIVNLPYLQAIVRETLRIHPGGPLIVRESSKSVVVCGYEIPAKTRLFVNVWAIGRDPNHWENPFEFRPERFFENGQSQLDVRGQHYHFIPFGSGRRSCPGTSLALQIVHVNLAIMIQCFQWKFDNGNNKVDMEEKSGITLPRAHPIICVPVPRLNPFPVM.

Position 440 (Cys440) interacts with heme.

This sequence belongs to the cytochrome P450 family. It depends on heme as a cofactor.

The protein resides in the membrane. The protein is Cytochrome P450 93A2 (CYP93A2) of Glycine max (Soybean).